The primary structure comprises 547 residues: Intercellular adhesion molecule 3 (547 aa).

A signal peptide spans 1–29; that stretch reads MATMVPSVLWPRACWTLLVCCLLTPGVQG. Residues 30–485 are Extracellular-facing; that stretch reads QEFLLRVEPQ…VMDIEAGSSH (456 aa). Positions 46 to 103 constitute an Ig-like C2-type 1 domain; that stretch reads GGSLFVNCSTDCPSSEKIALETSLSKELVASGMGWAAFNLSNVTGNSRILCSVYCNGS. 6 N-linked (GlcNAc...) asparagine glycosylation sites follow: Asn-52, Asn-84, Asn-87, Asn-101, Asn-110, and Asn-134. Cystine bridges form between Cys-53–Cys-96 and Cys-57–Cys-100. The Ig-like C2-type 2 domain occupies 132–197; it reads GQNFTLRCQV…FSCRTELDMQ (66 aa). Cys-139 and Cys-190 are joined by a disulfide. Asn-206, Asn-264, Asn-295, Asn-308, Asn-320, Asn-363, Asn-389, Asn-453, and Asn-457 each carry an N-linked (GlcNAc...) asparagine glycan. An Ig-like C2-type 3 domain is found at 234 to 301; that stretch reads ETSWPVDCTL…IVCNVTLGGE (68 aa). A disulfide bond links Cys-241 and Cys-294. In terms of domain architecture, Ig-like C2-type 4 spans 329–382; it reads GSTVTVSCMAGARVQVTLDGVPAAAPGQPAQLQLNATESDDGRSFFCSATLEVD. A disulfide bridge links Cys-336 with Cys-375. One can recognise an Ig-like C2-type 5 domain in the interval 416–469; it reads KTRHVLQCQARGNPYPELRCLKEGSSREVPVGIPFFVNVTHNGTYQCQASSSRG. An intrachain disulfide couples Cys-423 to Cys-462. A helical membrane pass occupies residues 486–510; sequence FVPVFVAVLLTLGVVTIVLALMYVF. The Cytoplasmic portion of the chain corresponds to 511 to 547; that stretch reads REHQRSGSYHVREESTYLPLTSMQPTEAMGEEPSRAE.

This sequence belongs to the immunoglobulin superfamily. ICAM family. In terms of assembly, interacts with moesin/MSN. Post-translationally, upon stimulation by a physiologic stimuli becomes rapidly and transiently phosphorylated on serine residues. N-glycosylated; glycans consist of a mixture of tri- and tetra-antennary complex-type chains and high-mannose chains. In terms of tissue distribution, leukocytes.

It localises to the membrane. ICAM proteins are ligands for the leukocyte adhesion protein LFA-1 (integrin alpha-L/beta-2). ICAM3 is also a ligand for integrin alpha-D/beta-2. In association with integrin alpha-L/beta-2, contributes to apoptotic neutrophil phagocytosis by macrophages. This chain is Intercellular adhesion molecule 3 (ICAM3), found in Homo sapiens (Human).